The primary structure comprises 102 residues: Small ribosomal subunit protein uS10 (102 aa).

The protein belongs to the universal ribosomal protein uS10 family. In terms of assembly, part of the 30S ribosomal subunit.

Functionally, involved in the binding of tRNA to the ribosomes. In Methanospirillum hungatei JF-1 (strain ATCC 27890 / DSM 864 / NBRC 100397 / JF-1), this protein is Small ribosomal subunit protein uS10.